The following is a 209-amino-acid chain: Uridine kinase (209 aa).

12 to 19 (GGSGSGKT) is an ATP binding site.

Belongs to the uridine kinase family.

It is found in the cytoplasm. It catalyses the reaction uridine + ATP = UMP + ADP + H(+). It carries out the reaction cytidine + ATP = CMP + ADP + H(+). The protein operates within pyrimidine metabolism; CTP biosynthesis via salvage pathway; CTP from cytidine: step 1/3. It participates in pyrimidine metabolism; UMP biosynthesis via salvage pathway; UMP from uridine: step 1/1. This chain is Uridine kinase, found in Listeria innocua serovar 6a (strain ATCC BAA-680 / CLIP 11262).